The primary structure comprises 1101 residues: Isoleucine--tRNA ligase (1101 aa).

Residues 50 to 60 (PFANGLPHYGH) carry the 'HIGH' region motif. A 'KMSKS' region motif is present at residues 629–633 (KLSKR). Position 632 (Lys-632) interacts with ATP.

This sequence belongs to the class-I aminoacyl-tRNA synthetase family. IleS type 2 subfamily. Monomer. Zn(2+) is required as a cofactor.

It is found in the cytoplasm. The catalysed reaction is tRNA(Ile) + L-isoleucine + ATP = L-isoleucyl-tRNA(Ile) + AMP + diphosphate. Catalyzes the attachment of isoleucine to tRNA(Ile). As IleRS can inadvertently accommodate and process structurally similar amino acids such as valine, to avoid such errors it has two additional distinct tRNA(Ile)-dependent editing activities. One activity is designated as 'pretransfer' editing and involves the hydrolysis of activated Val-AMP. The other activity is designated 'posttransfer' editing and involves deacylation of mischarged Val-tRNA(Ile). This is Isoleucine--tRNA ligase from Anaplasma marginale (strain St. Maries).